A 166-amino-acid polypeptide reads, in one-letter code: uncharacterized protein (166 aa).

This is an uncharacterized protein from Bacillus subtilis (strain 168).